A 158-amino-acid polypeptide reads, in one-letter code: uncharacterized protein (158 aa).

Positions 1 to 30 (MNKKFLKCGTLFLISCSILGSTIPAVTVFS) are cleaved as a signal peptide.

This is an uncharacterized protein from Streptococcus pneumoniae serotype 2 (strain D39 / NCTC 7466).